A 202-amino-acid chain; its full sequence is Probable thymidylate kinase (202 aa).

ATP is bound at residue Gly-13–Thr-20.

The protein belongs to the thymidylate kinase family.

It catalyses the reaction dTMP + ATP = dTDP + ADP. The sequence is that of Probable thymidylate kinase from Picrophilus torridus (strain ATCC 700027 / DSM 9790 / JCM 10055 / NBRC 100828 / KAW 2/3).